The sequence spans 133 residues: Holo-[acyl-carrier-protein] synthase (133 aa).

Residues D8 and E58 each coordinate Mg(2+).

It belongs to the P-Pant transferase superfamily. AcpS family. The cofactor is Mg(2+).

The protein localises to the cytoplasm. It catalyses the reaction apo-[ACP] + CoA = holo-[ACP] + adenosine 3',5'-bisphosphate + H(+). In terms of biological role, transfers the 4'-phosphopantetheine moiety from coenzyme A to a Ser of acyl-carrier-protein. In Sphingopyxis alaskensis (strain DSM 13593 / LMG 18877 / RB2256) (Sphingomonas alaskensis), this protein is Holo-[acyl-carrier-protein] synthase.